The following is a 223-amino-acid chain: Family of serine hydrolases 2 (223 aa).

Catalysis depends on charge relay system residues serine 110, aspartate 174, and histidine 203.

The protein belongs to the AB hydrolase 3 family.

It localises to the cytoplasm. Functionally, serine hydrolase of unknown specificity. This chain is Family of serine hydrolases 2 (FSH2), found in Saccharomyces cerevisiae (strain ATCC 204508 / S288c) (Baker's yeast).